The following is a 244-amino-acid chain: Mitochondrial import inner membrane translocase subunit Tim21 (244 aa).

The N-terminal 18 residues, 1 to 18 (MICAFLRVVQHAEKLHGS), are a transit peptide targeting the mitochondrion. The disordered stretch occupies residues 65-96 (TQGPDPRKAKEDSTKQVSIRRNQREETGVSMS). Positions 69-78 (DPRKAKEDST) are enriched in basic and acidic residues. A helical membrane pass occupies residues 107–127 (SYLIVVLFGVGLTGGLLYAIF).

The protein belongs to the TIM21 family. In terms of assembly, component of the TIM23 complex. Component of the MITRAC (mitochondrial translation regulation assembly intermediate of cytochrome c oxidase complex) complex, the core components of this complex being COA3/MITRAC12 and COX14. Interacts with COA3 and MT-CO1/COX1.

The protein localises to the mitochondrion membrane. In terms of biological role, participates in the translocation of transit peptide-containing proteins across the mitochondrial inner membrane. Also required for assembly of mitochondrial respiratory chain complex I and complex IV as component of the MITRAC (mitochondrial translation regulation assembly intermediate of cytochrome c oxidase complex) complex. Probably shuttles between the presequence translocase and respiratory-chain assembly intermediates in a process that promotes incorporation of early nuclear-encoded subunits into these complexes. The protein is Mitochondrial import inner membrane translocase subunit Tim21 (Timm21) of Mus musculus (Mouse).